We begin with the raw amino-acid sequence, 354 residues long: Ornithine transcarbamylase, mitochondrial (354 aa).

The transit peptide at 1 to 32 directs the protein to the mitochondrion; it reads MLFHLRTLLNNAALRNGHNFVVRNFRCGQPLQ. N6-acetyllysine; alternate is present on Lys70. Lys70 carries the post-translational modification N6-succinyllysine; alternate. Lys80 carries the post-translational modification N6-succinyllysine. Position 88 is an N6-acetyllysine; alternate (Lys88). Lys88 bears the N6-succinyllysine; alternate mark. A Phosphoserine modification is found at Ser133. An N6-acetyllysine; alternate mark is found at Lys144, Lys221, Lys231, and Lys238. 4 positions are modified to N6-succinyllysine; alternate: Lys144, Lys221, Lys231, and Lys238. The residue at position 243 (Lys243) is an N6-acetyllysine. Asp263 is a catalytic residue. N6-succinyllysine occurs at positions 274 and 289. Lys292 carries the post-translational modification N6-acetyllysine; alternate. N6-succinyllysine; alternate is present on Lys292. Cys303 is a catalytic residue. N6-acetyllysine; alternate is present on Lys307. The residue at position 307 (Lys307) is an N6-succinyllysine; alternate.

It belongs to the aspartate/ornithine carbamoyltransferase superfamily. OTCase family. As to quaternary structure, homotrimer. Post-translationally, acetylation at Lys-88 negatively regulates ornithine carbamoyltransferase activity in response to nutrient signals.

Its subcellular location is the mitochondrion matrix. It carries out the reaction carbamoyl phosphate + L-ornithine = L-citrulline + phosphate + H(+). It participates in nitrogen metabolism; urea cycle; L-citrulline from L-ornithine and carbamoyl phosphate: step 1/1. With respect to regulation, negatively regulated by lysine acetylation. In terms of biological role, catalyzes the second step of the urea cycle, the condensation of carbamoyl phosphate with L-ornithine to form L-citrulline. The urea cycle ensures the detoxification of ammonia by converting it to urea for excretion. This Bos taurus (Bovine) protein is Ornithine transcarbamylase, mitochondrial.